The following is a 271-amino-acid chain: Aspartate/glutamate leucyltransferase (271 aa).

It belongs to the R-transferase family. Bpt subfamily.

Its subcellular location is the cytoplasm. The catalysed reaction is N-terminal L-glutamyl-[protein] + L-leucyl-tRNA(Leu) = N-terminal L-leucyl-L-glutamyl-[protein] + tRNA(Leu) + H(+). The enzyme catalyses N-terminal L-aspartyl-[protein] + L-leucyl-tRNA(Leu) = N-terminal L-leucyl-L-aspartyl-[protein] + tRNA(Leu) + H(+). Its function is as follows. Functions in the N-end rule pathway of protein degradation where it conjugates Leu from its aminoacyl-tRNA to the N-termini of proteins containing an N-terminal aspartate or glutamate. This chain is Aspartate/glutamate leucyltransferase, found in Acinetobacter baumannii (strain SDF).